Here is a 563-residue protein sequence, read N- to C-terminus: 4-hydroxy-7-methoxy-3-oxo-3,4-dihydro-2H-1,4-benzoxazin-2-yl glucoside beta-D-glucosidase 2, chloroplastic (563 aa).

A chloroplast-targeting transit peptide spans Met-1–Arg-51. Positions Leu-17 to Arg-43 are disordered. Residues Gln-89, His-193, and Asn-241 to Glu-242 contribute to the a beta-D-glucoside site. The active-site Proton donor is Glu-242. An intrachain disulfide couples Cys-261 to Cys-267. Residues Ser-322–Arg-358 form a dimerization region. Tyr-384 is an a beta-D-glucoside binding site. 2 dimerization regions span residues His-391 to Leu-402 and Lys-447 to Asn-450. A beta-D-glucoside is bound by residues Glu-457, Trp-508, Glu-515–Trp-516, and Tyr-524. The active-site Nucleophile is the Glu-457.

This sequence belongs to the glycosyl hydrolase 1 family. In terms of assembly, homo- and heterodimer. In terms of tissue distribution, expressed in leaves only starting at day 6 after germination.

It localises to the plastid. The protein resides in the chloroplast. It carries out the reaction Hydrolysis of terminal, non-reducing beta-D-glucosyl residues with release of beta-D-glucose.. The enzyme catalyses DIMBOA beta-D-glucoside + H2O = DIMBOA + D-glucose. The catalysed reaction is DIBOA beta-D-glucoside + H2O = DIBOA + D-glucose. Functionally, beta-glucosidase acting poorly on artificial aryl beta-glucosides. Has no activity toward the chromogenic substrate 6-bromo-2-naphthyl-beta-D-glucoside (6BNGlc). This Zea mays (Maize) protein is 4-hydroxy-7-methoxy-3-oxo-3,4-dihydro-2H-1,4-benzoxazin-2-yl glucoside beta-D-glucosidase 2, chloroplastic (GLU2).